Reading from the N-terminus, the 432-residue chain is Adenylosuccinate synthetase (432 aa).

Residues 12–18 (GDEGKGK) and 40–42 (GHT) each bind GTP. The Proton acceptor role is filled by aspartate 13. 2 residues coordinate Mg(2+): aspartate 13 and glycine 40. IMP-binding positions include 13-16 (DEGK), 38-41 (NAGH), threonine 132, arginine 146, glutamine 226, threonine 241, and arginine 305. Histidine 41 functions as the Proton donor in the catalytic mechanism. 301–307 (TVTGRKR) is a substrate binding site. GTP-binding positions include arginine 307, 333–335 (KLD), and 415–417 (STS).

Belongs to the adenylosuccinate synthetase family. Homodimer. It depends on Mg(2+) as a cofactor.

Its subcellular location is the cytoplasm. It carries out the reaction IMP + L-aspartate + GTP = N(6)-(1,2-dicarboxyethyl)-AMP + GDP + phosphate + 2 H(+). It functions in the pathway purine metabolism; AMP biosynthesis via de novo pathway; AMP from IMP: step 1/2. Its function is as follows. Plays an important role in the de novo pathway of purine nucleotide biosynthesis. Catalyzes the first committed step in the biosynthesis of AMP from IMP. The polypeptide is Adenylosuccinate synthetase (Allorhizobium ampelinum (strain ATCC BAA-846 / DSM 112012 / S4) (Agrobacterium vitis (strain S4))).